A 477-amino-acid chain; its full sequence is Alkaline phosphatase (477 aa).

Residue D44 participates in Mg(2+) binding. D44 provides a ligand contact to Zn(2+). The Phosphoserine intermediate role is filled by S94. An N-linked (GlcNAc...) asparagine glycan is attached at N124. Positions 155 and 157 each coordinate Mg(2+). The cysteines at positions 165 and 185 are disulfide-linked. N214 is a glycosylation site (N-linked (GlcNAc...) asparagine). E315 serves as a coordination point for Mg(2+). Positions 320, 324, 361, and 362 each coordinate Zn(2+). N-linked (GlcNAc...) asparagine glycosylation occurs at N413. H437 is a Zn(2+) binding site.

As to quaternary structure, homodimer. It depends on Mg(2+) as a cofactor. The cofactor is Zn(2+).

Its subcellular location is the cell membrane. It carries out the reaction a phosphate monoester + H2O = an alcohol + phosphate. This Gadus morhua (Atlantic cod) protein is Alkaline phosphatase.